The sequence spans 238 residues: N-methyltransferase vrtF (238 aa).

Belongs to the methyltransferase superfamily.

It participates in secondary metabolite biosynthesis; terpenoid biosynthesis. Its function is as follows. N-methyltransferase; part of the gene cluster that mediates the biosynthesis of viridicatumtoxin, a tetracycline-like fungal meroterpenoid with a unique, fused spirobicyclic ring system. The first step of the pathway is the production of the malonamoyl-CoA starter unit for the polyketide synthase vrtA. The aldolase vrtJ may be involved in the synthesis of the malonamate substrate for malonamoyl-CoA synthetase vrtB. The polyketide synthase vrtA then may utilize the malonamoyl-CoA starter unit, followed by sequential condensation of eight malonyl-CoA units to form the polyketide backbone. The cyclization of the last ring could be mediated by the lactamase-like protein vrtG. The proposed post-PKS tailoring steps are a hydroxylation at C5 catalyzed the cytochrome P450 monooxygenase vrtE, a hydroxylation at C12a catalyzed by VrtH and/or VrtI, and an O-methylation by the O-methyltransferase vrtF. VrtC is then proposed to catalyze the transfer of a geranyl group synthesized by vrtD to the aromatic C ring of the tetracyclic polyketide intermediate of viridicatumtoxin to yield previridicatumtoxin. Finally, the cytochrome P450 monooxygenase vrtK catalyzes the spirocyclization of the geranyl moiety of previridicatumtoxin to afford viridicatumtoxin. The polypeptide is N-methyltransferase vrtF (Penicillium aethiopicum).